Here is a 155-residue protein sequence, read N- to C-terminus: Basic phospholipase A2 PC1 (155 aa).

The first 21 residues, 1–21 (MYPAHLLVLLAVCVSLLGASA), serve as a signal peptide directing secretion. Residues 22–27 (ISNRPR) constitute a propeptide that is removed on maturation. 7 disulfides stabilise this stretch: cysteine 38/cysteine 98, cysteine 54/cysteine 144, cysteine 56/cysteine 72, cysteine 71/cysteine 125, cysteine 78/cysteine 118, cysteine 87/cysteine 111, and cysteine 105/cysteine 116. Residues tyrosine 55, glycine 57, and glycine 59 each coordinate Ca(2+). Histidine 75 is a catalytic residue. Aspartate 76 serves as a coordination point for Ca(2+). Aspartate 119 is an active-site residue.

Belongs to the phospholipase A2 family. Group I subfamily. D49 sub-subfamily. The cofactor is Ca(2+). In terms of tissue distribution, expressed by the venom gland.

The protein resides in the secreted. It catalyses the reaction a 1,2-diacyl-sn-glycero-3-phosphocholine + H2O = a 1-acyl-sn-glycero-3-phosphocholine + a fatty acid + H(+). Its function is as follows. Snake venom phospholipase A2 (PLA2) that inhibits neuromuscular transmission by blocking acetylcholine release from the nerve termini. PLA2 catalyzes the calcium-dependent hydrolysis of the 2-acyl groups in 3-sn-phosphoglycerides. The sequence is that of Basic phospholipase A2 PC1 from Laticauda colubrina (Yellow-lipped sea krait).